The chain runs to 366 residues: tRNA-specific 2-thiouridylase MnmA (366 aa).

Residues 6–13 (AMSGGVDS) and L32 contribute to the ATP site. The active-site Nucleophile is the C101. Cysteines 101 and 197 form a disulfide. An ATP-binding site is contributed by G125. The interval 147–149 (KDQ) is interaction with tRNA. C197 serves as the catalytic Cysteine persulfide intermediate.

It belongs to the MnmA/TRMU family.

The protein resides in the cytoplasm. It carries out the reaction S-sulfanyl-L-cysteinyl-[protein] + uridine(34) in tRNA + AH2 + ATP = 2-thiouridine(34) in tRNA + L-cysteinyl-[protein] + A + AMP + diphosphate + H(+). Functionally, catalyzes the 2-thiolation of uridine at the wobble position (U34) of tRNA, leading to the formation of s(2)U34. This chain is tRNA-specific 2-thiouridylase MnmA, found in Cutibacterium acnes (strain DSM 16379 / KPA171202) (Propionibacterium acnes).